We begin with the raw amino-acid sequence, 342 residues long: Homocysteine S-methyltransferase 4 (342 aa).

The Hcy-binding domain maps to 13 to 328; it reads ALRGFVREAG…ATVRAIARAV (316 aa). 3 residues coordinate Zn(2+): Cys-245, Cys-313, and Cys-314.

Monomer. Zn(2+) serves as cofactor.

The enzyme catalyses S-methyl-L-methionine + L-homocysteine = 2 L-methionine + H(+). Catalyzes methyl transfer from S-methylmethionine (SMM) to adenosyl-L-homocysteine (AdoMet). SMM degradation (by HMT-1, HMT-2, HMT-3 and HMT-4) and biosynthesis (by MMT1) constitute the SMM cycle in plants, which is probably required to achieve short term control of AdoMet level. The chain is Homocysteine S-methyltransferase 4 (HMT-4) from Zea mays (Maize).